The chain runs to 323 residues: Methionyl-tRNA formyltransferase (323 aa).

115-118 provides a ligand contact to (6S)-5,6,7,8-tetrahydrofolate; that stretch reads SLLP.

Belongs to the Fmt family.

It catalyses the reaction L-methionyl-tRNA(fMet) + (6R)-10-formyltetrahydrofolate = N-formyl-L-methionyl-tRNA(fMet) + (6S)-5,6,7,8-tetrahydrofolate + H(+). Functionally, attaches a formyl group to the free amino group of methionyl-tRNA(fMet). The formyl group appears to play a dual role in the initiator identity of N-formylmethionyl-tRNA by promoting its recognition by IF2 and preventing the misappropriation of this tRNA by the elongation apparatus. This Lactococcus lactis subsp. cremoris (strain MG1363) protein is Methionyl-tRNA formyltransferase.